Consider the following 714-residue polypeptide: Structure-specific endonuclease subunit SLX4 1 (714 aa).

2 stretches are compositionally biased toward basic and acidic residues: residues 1–14 (MSPE…EDNL) and 24–34 (IHEETLAEESH). Disordered stretches follow at residues 1–116 (MSPE…QGSI) and 337–369 (DSSG…KTPQ). Low complexity predominate over residues 36–46 (QSIQRSISRLS). Over residues 79–92 (KTKKRKLKVSKPRK) the composition is skewed to basic residues.

It belongs to the SLX4 family. Forms a heterodimer with SLX1. Phosphorylated in response to DNA damage.

It localises to the nucleus. Functionally, regulatory subunit of the SLX1-SLX4 structure-specific endonuclease that resolves DNA secondary structures generated during DNA repair and recombination. Has endonuclease activity towards branched DNA substrates, introducing single-strand cuts in duplex DNA close to junctions with ss-DNA. The protein is Structure-specific endonuclease subunit SLX4 1 of Candida tropicalis (strain ATCC MYA-3404 / T1) (Yeast).